Consider the following 445-residue polypeptide: Exodeoxyribonuclease 7 large subunit (445 aa).

Belongs to the XseA family. Heterooligomer composed of large and small subunits.

The protein localises to the cytoplasm. It catalyses the reaction Exonucleolytic cleavage in either 5'- to 3'- or 3'- to 5'-direction to yield nucleoside 5'-phosphates.. Functionally, bidirectionally degrades single-stranded DNA into large acid-insoluble oligonucleotides, which are then degraded further into small acid-soluble oligonucleotides. This Staphylococcus haemolyticus (strain JCSC1435) protein is Exodeoxyribonuclease 7 large subunit.